A 490-amino-acid chain; its full sequence is Thiamine biosynthesis bifunctional protein ThiED (490 aa).

The thiamine-phosphate synthase stretch occupies residues 1 to 213 (MASNGHTLRL…PDPALAATEI (213 aa)). 4-amino-2-methyl-5-(diphosphooxymethyl)pyrimidine is bound by residues 50–54 (QYRNK) and Asn82. Asp83 and Asp102 together coordinate Mg(2+). Ser121 lines the 4-amino-2-methyl-5-(diphosphooxymethyl)pyrimidine pocket. 2-[(2R,5Z)-2-carboxy-4-methylthiazol-5(2H)-ylidene]ethyl phosphate is bound at residue 147-149 (SRS). Residue Lys150 participates in 4-amino-2-methyl-5-(diphosphooxymethyl)pyrimidine binding. Residues Gly177 and 197–198 (IS) each bind 2-[(2R,5Z)-2-carboxy-4-methylthiazol-5(2H)-ylidene]ethyl phosphate. The tract at residues 229–490 (LTVAGSDSGG…ILAAEDVRDR (262 aa)) is hydroxymethylpyrimidine/phosphomethylpyrimidine kinase. Gln266 is a binding site for 4-amino-5-hydroxymethyl-2-methylpyrimidine.

In the N-terminal section; belongs to the thiamine-phosphate synthase family. It in the C-terminal section; belongs to the ThiD family. Requires Mg(2+) as cofactor.

The enzyme catalyses 2-[(2R,5Z)-2-carboxy-4-methylthiazol-5(2H)-ylidene]ethyl phosphate + 4-amino-2-methyl-5-(diphosphooxymethyl)pyrimidine + 2 H(+) = thiamine phosphate + CO2 + diphosphate. It carries out the reaction 2-(2-carboxy-4-methylthiazol-5-yl)ethyl phosphate + 4-amino-2-methyl-5-(diphosphooxymethyl)pyrimidine + 2 H(+) = thiamine phosphate + CO2 + diphosphate. It catalyses the reaction 4-methyl-5-(2-phosphooxyethyl)-thiazole + 4-amino-2-methyl-5-(diphosphooxymethyl)pyrimidine + H(+) = thiamine phosphate + diphosphate. The catalysed reaction is 4-amino-5-hydroxymethyl-2-methylpyrimidine + ATP = 4-amino-2-methyl-5-(phosphooxymethyl)pyrimidine + ADP + H(+). The enzyme catalyses 4-amino-2-methyl-5-(phosphooxymethyl)pyrimidine + ATP = 4-amino-2-methyl-5-(diphosphooxymethyl)pyrimidine + ADP. It participates in cofactor biosynthesis; thiamine diphosphate biosynthesis; 4-amino-2-methyl-5-diphosphomethylpyrimidine from 5-amino-1-(5-phospho-D-ribosyl)imidazole: step 3/3. It functions in the pathway cofactor biosynthesis; thiamine diphosphate biosynthesis; thiamine phosphate from 4-amino-2-methyl-5-diphosphomethylpyrimidine and 4-methyl-5-(2-phosphoethyl)-thiazole: step 1/1. In terms of biological role, condenses 4-methyl-5-(beta-hydroxyethyl)thiazole monophosphate (THZ-P) and 2-methyl-4-amino-5-hydroxymethyl pyrimidine pyrophosphate (HMP-PP) to form thiamine monophosphate (TMP). Functionally, catalyzes the phosphorylation of hydroxymethylpyrimidine phosphate (HMP-P) to HMP-PP, and of HMP to HMP-P. This Geobacter sulfurreducens (strain ATCC 51573 / DSM 12127 / PCA) protein is Thiamine biosynthesis bifunctional protein ThiED (thiDE).